A 316-amino-acid polypeptide reads, in one-letter code: Ribose-phosphate pyrophosphokinase (316 aa).

Residues 39-41 (DGE) and 98-99 (RQ) contribute to the ATP site. His-133 and Asp-172 together coordinate Mg(2+). Residue Lys-195 is part of the active site. D-ribose 5-phosphate-binding positions include Arg-197, Asp-221, and 225–229 (DTANT).

Belongs to the ribose-phosphate pyrophosphokinase family. Class I subfamily. As to quaternary structure, homohexamer. Mg(2+) serves as cofactor.

The protein localises to the cytoplasm. The enzyme catalyses D-ribose 5-phosphate + ATP = 5-phospho-alpha-D-ribose 1-diphosphate + AMP + H(+). It participates in metabolic intermediate biosynthesis; 5-phospho-alpha-D-ribose 1-diphosphate biosynthesis; 5-phospho-alpha-D-ribose 1-diphosphate from D-ribose 5-phosphate (route I): step 1/1. Functionally, involved in the biosynthesis of the central metabolite phospho-alpha-D-ribosyl-1-pyrophosphate (PRPP) via the transfer of pyrophosphoryl group from ATP to 1-hydroxyl of ribose-5-phosphate (Rib-5-P). The sequence is that of Ribose-phosphate pyrophosphokinase from Nitrosomonas europaea (strain ATCC 19718 / CIP 103999 / KCTC 2705 / NBRC 14298).